The primary structure comprises 126 residues: Nascent polypeptide-associated complex protein (126 aa).

The NAC-A/B domain occupies Pro-10 to Lys-77.

The protein belongs to the NAC-alpha family. In terms of assembly, homodimer. Interacts with the ribosome. Binds ribosomal RNA.

Functionally, contacts the emerging nascent chain on the ribosome. This Methanococcus maripaludis (strain DSM 14266 / JCM 13030 / NBRC 101832 / S2 / LL) protein is Nascent polypeptide-associated complex protein.